Consider the following 95-residue polypeptide: Small integral membrane protein 18 (95 aa).

The chain crosses the membrane as a helical span at residues 35–55 (CFVILLLFIFTVVSLVVLAFL).

Its subcellular location is the membrane. The protein is Small integral membrane protein 18 (SMIM18) of Homo sapiens (Human).